Reading from the N-terminus, the 136-residue chain is 6,7-dimethyl-8-ribityllumazine synthase (136 aa).

Residues Phe11, 43 to 45, and 67 to 69 contribute to the 5-amino-6-(D-ribitylamino)uracil site; these read VYD and CVI. 72–73 serves as a coordination point for (2S)-2-hydroxy-3-oxobutyl phosphate; the sequence is DT. The Proton donor role is filled by His75. Leu100 provides a ligand contact to 5-amino-6-(D-ribitylamino)uracil. Arg115 contributes to the (2S)-2-hydroxy-3-oxobutyl phosphate binding site.

This sequence belongs to the DMRL synthase family. In terms of assembly, forms an icosahedral capsid composed of 60 subunits, arranged as a dodecamer of pentamers.

The enzyme catalyses (2S)-2-hydroxy-3-oxobutyl phosphate + 5-amino-6-(D-ribitylamino)uracil = 6,7-dimethyl-8-(1-D-ribityl)lumazine + phosphate + 2 H2O + H(+). It functions in the pathway cofactor biosynthesis; riboflavin biosynthesis; riboflavin from 2-hydroxy-3-oxobutyl phosphate and 5-amino-6-(D-ribitylamino)uracil: step 1/2. Catalyzes the formation of 6,7-dimethyl-8-ribityllumazine by condensation of 5-amino-6-(D-ribitylamino)uracil with 3,4-dihydroxy-2-butanone 4-phosphate. This is the penultimate step in the biosynthesis of riboflavin. The chain is 6,7-dimethyl-8-ribityllumazine synthase from Methanococcus aeolicus (strain ATCC BAA-1280 / DSM 17508 / OCM 812 / Nankai-3).